Here is a 100-residue protein sequence, read N- to C-terminus: Urease subunit gamma (100 aa).

Belongs to the urease gamma subunit family. In terms of assembly, heterotrimer of UreA (gamma), UreB (beta) and UreC (alpha) subunits. Three heterotrimers associate to form the active enzyme.

The protein resides in the cytoplasm. It catalyses the reaction urea + 2 H2O + H(+) = hydrogencarbonate + 2 NH4(+). It participates in nitrogen metabolism; urea degradation; CO(2) and NH(3) from urea (urease route): step 1/1. The sequence is that of Urease subunit gamma from Thioalkalivibrio sulfidiphilus (strain HL-EbGR7).